We begin with the raw amino-acid sequence, 273 residues long: Cell division protein ZipA (273 aa).

Met1 is a topological domain (periplasmic). A helical membrane pass occupies residues 2–22; sequence DIGLREWLIVIGIIVIAGILF. Residues 23 to 273 lie on the Cytoplasmic side of the membrane; that stretch reads DGWRRMRGGK…ERRQMTIKQR (251 aa). The segment at 61–127 is disordered; that stretch reads VVNREHEPSL…DLQERPQKEQ (67 aa).

The protein belongs to the ZipA family. In terms of assembly, interacts with FtsZ via their C-terminal domains.

Its subcellular location is the cell inner membrane. Functionally, essential cell division protein that stabilizes the FtsZ protofilaments by cross-linking them and that serves as a cytoplasmic membrane anchor for the Z ring. Also required for the recruitment to the septal ring of downstream cell division proteins. This chain is Cell division protein ZipA, found in Stutzerimonas stutzeri (strain A1501) (Pseudomonas stutzeri).